The chain runs to 182 residues: Flagellar transcriptional regulator FlhC (182 aa).

The Zn(2+) site is built by Cys138, Cys141, Cys158, and Cys161.

The protein belongs to the FlhC family. As to quaternary structure, heterohexamer composed of two FlhC and four FlhD subunits. Each FlhC binds a FlhD dimer, forming a heterotrimer, and a hexamer assembles by dimerization of two heterotrimers. Zn(2+) is required as a cofactor.

The protein localises to the cytoplasm. Its function is as follows. Functions in complex with FlhD as a master transcriptional regulator that regulates transcription of several flagellar and non-flagellar operons by binding to their promoter region. Activates expression of class 2 flagellar genes, including fliA, which is a flagellum-specific sigma factor that turns on the class 3 genes. Also regulates genes whose products function in a variety of physiological pathways. This chain is Flagellar transcriptional regulator FlhC, found in Gallionella capsiferriformans (strain ES-2) (Gallionella ferruginea capsiferriformans (strain ES-2)).